We begin with the raw amino-acid sequence, 125 residues long: S-adenosylmethionine decarboxylase proenzyme (125 aa).

The Schiff-base intermediate with substrate; via pyruvic acid role is filled by serine 63. Serine 63 carries the pyruvic acid (Ser); by autocatalysis modification. Histidine 68 (proton acceptor; for processing activity) is an active-site residue. The active-site Proton donor; for catalytic activity is the cysteine 83.

Belongs to the prokaryotic AdoMetDC family. Type 1 subfamily. Heterotetramer of two alpha and two beta chains arranged as a dimer of alpha/beta heterodimers. Pyruvate serves as cofactor. Is synthesized initially as an inactive proenzyme. Formation of the active enzyme involves a self-maturation process in which the active site pyruvoyl group is generated from an internal serine residue via an autocatalytic post-translational modification. Two non-identical subunits are generated from the proenzyme in this reaction, and the pyruvate is formed at the N-terminus of the alpha chain, which is derived from the carboxyl end of the proenzyme. The post-translation cleavage follows an unusual pathway, termed non-hydrolytic serinolysis, in which the side chain hydroxyl group of the serine supplies its oxygen atom to form the C-terminus of the beta chain, while the remainder of the serine residue undergoes an oxidative deamination to produce ammonia and the pyruvoyl group blocking the N-terminus of the alpha chain.

It catalyses the reaction S-adenosyl-L-methionine + H(+) = S-adenosyl 3-(methylsulfanyl)propylamine + CO2. The protein operates within amine and polyamine biosynthesis; S-adenosylmethioninamine biosynthesis; S-adenosylmethioninamine from S-adenosyl-L-methionine: step 1/1. Functionally, catalyzes the decarboxylation of S-adenosylmethionine to S-adenosylmethioninamine (dcAdoMet), the propylamine donor required for the synthesis of the polyamines spermine and spermidine from the diamine putrescine. This is S-adenosylmethionine decarboxylase proenzyme from Moorella thermoacetica (strain ATCC 39073 / JCM 9320).